A 294-amino-acid polypeptide reads, in one-letter code: Tyrosine-protein phosphatase (294 aa).

A signal peptide spans 1–24 (MKTHHANLALALMLGLSSSATAVA). Cys182 acts as the Phosphocysteine intermediate in catalysis. 2 stretches are compositionally biased toward basic and acidic residues: residues 221–231 (QPKDSDERADH) and 238–247 (PGDRPQDGGH). The segment at 221–252 (QPKDSDERADHGAGQAEPGDRPQDGGHGRYRA) is disordered.

It belongs to the protein-tyrosine phosphatase family. In terms of assembly, monomer.

It carries out the reaction O-phospho-L-tyrosyl-[protein] + H2O = L-tyrosyl-[protein] + phosphate. This Nostoc commune protein is Tyrosine-protein phosphatase (iphP).